Here is a 558-residue protein sequence, read N- to C-terminus: Formate--tetrahydrofolate ligase (558 aa).

An ATP-binding site is contributed by 66–73 (TPAGEGKT).

The protein belongs to the formate--tetrahydrofolate ligase family.

It catalyses the reaction (6S)-5,6,7,8-tetrahydrofolate + formate + ATP = (6R)-10-formyltetrahydrofolate + ADP + phosphate. It functions in the pathway one-carbon metabolism; tetrahydrofolate interconversion. This Clostridioides difficile (strain 630) (Peptoclostridium difficile) protein is Formate--tetrahydrofolate ligase.